Reading from the N-terminus, the 101-residue chain is Small ribosomal subunit protein uS14 (101 aa).

This sequence belongs to the universal ribosomal protein uS14 family. Part of the 30S ribosomal subunit. Contacts proteins S3 and S10.

In terms of biological role, binds 16S rRNA, required for the assembly of 30S particles and may also be responsible for determining the conformation of the 16S rRNA at the A site. The chain is Small ribosomal subunit protein uS14 from Serratia proteamaculans (strain 568).